We begin with the raw amino-acid sequence, 181 residues long: Putative J domain-containing protein R266 (181 aa).

The region spanning 6 to 70 is the J domain; the sequence is NYYQILDVDN…LKRLNYDSYL (65 aa).

This Acanthamoeba polyphaga (Amoeba) protein is Putative J domain-containing protein R266.